An 892-amino-acid chain; its full sequence is MGNWKRLLTSAAVVMVVLAGLLLAIVLAATHFLVEWWWFKSLDLGAYFWLRFLYRYILSGGVTLFFFLIFFLNFWAASQYLGVDQAIYAAGSEESRYRRWLRMFQTGALPVYLPLSVFLAVLVALPFYHEWEAGLLFFFAPAAGVTEPVFGEDAGFHMFRIPILVLIQSELLVCASVLAVMVAALYWVEHEFSPAHRRPWPRGARIHLNLLVVLVAVVAAWGYVLQRDELLYVDAHEPVFFGPGLIELRYHLPLIWVEIVSLVVGVVAALWFAQRHRGLKLALTCALVWVSAAALRKIDVVPQLIDRFVVKPNPVKTEREFIKYNIEATLAAFDLDEIRTIDITAAPEGSETIDPHVREHLHNIPVWDPEYLDDVYQQLQGIRPYYSFTEVDTARYLVNGQIEQVNLAAREINLAKLPEEARNWENIHLRYTHGYGAVITPAAQSGDQPMQWWLRDLNMHSDVGLTTEKPDIYFGLENLDYAIVPNRLNIVDIASFDQGSSQNYSGNGGVPISSLLRRLLLSIYFRDERLFFSLNITENSQALFHRNIIERINTVTPFLALDRDPYIVVTPQRIFWIVDAYTTLNSYPVSKRMRYKFRGDTEEREFNYIRNSVKIVVDAFDGSLDYYVVDHDDPVLKGYIKAYPGLFQDASAMPPLIRDQLRFPHDFFEIQMRMYAKYHQTQPELFYQQAETWDFAKVGVRLRDGRTVMRTVAPYYFTTQLDGCENMQNFVLINPMTPIGRNNMSVLAIGGALRPDACGMPYSKSIVLYKYSKDVQVDGPAQVSAMIDQDAEIAKEFALWDQKGSHLTRGRIIIVPIGRSLLYVQPVYIESTSSVKIPELARVILSMGDIVVMETSLEAALNKLEERLIALQKARGIVPVSPVRDSPGMHPM.

7 helical membrane-spanning segments follow: residues 7-27, 57-77, 107-127, 163-183, 206-226, 252-272, and 281-301; these read LLTSAAVVMVVLAGLLLAIVL, ILSGGVTLFFFLIFFLNFWAA, GALPVYLPLSVFLAVLVALPF, ILVLIQSELLVCASVLAVMVA, IHLNLLVVLVAVVAAWGYVLQ, LPLIWVEIVSLVVGVVAALWF, and LALTCALVWVSAAALRKIDVV.

It belongs to the UPF0182 family.

The protein resides in the cell membrane. The protein is UPF0182 protein MCA2716 of Methylococcus capsulatus (strain ATCC 33009 / NCIMB 11132 / Bath).